A 412-amino-acid polypeptide reads, in one-letter code: Serine hydroxymethyltransferase (412 aa).

(6S)-5,6,7,8-tetrahydrofolate-binding positions include leucine 117 and 121 to 123; that span reads GHL. N6-(pyridoxal phosphate)lysine is present on lysine 226.

Belongs to the SHMT family. In terms of assembly, homodimer. It depends on pyridoxal 5'-phosphate as a cofactor.

The protein resides in the cytoplasm. The catalysed reaction is (6R)-5,10-methylene-5,6,7,8-tetrahydrofolate + glycine + H2O = (6S)-5,6,7,8-tetrahydrofolate + L-serine. It functions in the pathway one-carbon metabolism; tetrahydrofolate interconversion. The protein operates within amino-acid biosynthesis; glycine biosynthesis; glycine from L-serine: step 1/1. In terms of biological role, catalyzes the reversible interconversion of serine and glycine with tetrahydrofolate (THF) serving as the one-carbon carrier. This reaction serves as the major source of one-carbon groups required for the biosynthesis of purines, thymidylate, methionine, and other important biomolecules. Also exhibits THF-independent aldolase activity toward beta-hydroxyamino acids, producing glycine and aldehydes, via a retro-aldol mechanism. The protein is Serine hydroxymethyltransferase of Staphylococcus aureus (strain bovine RF122 / ET3-1).